We begin with the raw amino-acid sequence, 518 residues long: ATP synthase subunit alpha (518 aa).

Residue Gly169–Thr176 participates in ATP binding.

This sequence belongs to the ATPase alpha/beta chains family. In terms of assembly, F-type ATPases have 2 components, CF(1) - the catalytic core - and CF(0) - the membrane proton channel. CF(1) has five subunits: alpha(3), beta(3), gamma(1), delta(1), epsilon(1). CF(0) has three main subunits: a(1), b(2) and c(9-12). The alpha and beta chains form an alternating ring which encloses part of the gamma chain. CF(1) is attached to CF(0) by a central stalk formed by the gamma and epsilon chains, while a peripheral stalk is formed by the delta and b chains.

The protein resides in the cell membrane. The enzyme catalyses ATP + H2O + 4 H(+)(in) = ADP + phosphate + 5 H(+)(out). In terms of biological role, produces ATP from ADP in the presence of a proton gradient across the membrane. The alpha chain is a regulatory subunit. The polypeptide is ATP synthase subunit alpha (Enterococcus faecalis (strain ATCC 700802 / V583)).